A 41-amino-acid polypeptide reads, in one-letter code: Disintegrin viperistatin (41 aa).

Disulfide bonds link Cys1–Cys10, Cys6–Cys29, Cys7–Cys34, and Cys19–Cys36. The Disintegrin domain occupies 1–41 (CTTGPCCRQCKLKPAGTTCWKTSRTSHYCTGKSCDCPVYQG). Positions 21–23 (KTS) match the Cell attachment site; atypical (KTS) motif.

In terms of assembly, monomer. In terms of tissue distribution, expressed by the venom gland.

Its subcellular location is the secreted. Potent and highly selective inhibitor of alpha-1/beta-1 (ITGA1/ITGB1) integrin binding to collagen I and IV. Is about 25-fold more potent than obtustatin inhibiting the binding of this integrin to collagen IV. This is Disintegrin viperistatin from Daboia palaestinae (Palestine viper).